A 277-amino-acid chain; its full sequence is Diaminopimelate epimerase (277 aa).

Substrate-binding residues include N13, Q46, and N66. Residue C75 is the Proton donor of the active site. Substrate contacts are provided by residues 76-77 (GN), N160, N193, and 211-212 (ER). The Proton acceptor role is filled by C220. Position 221–222 (221–222 (GT)) interacts with substrate.

This sequence belongs to the diaminopimelate epimerase family. Homodimer.

It is found in the cytoplasm. The catalysed reaction is (2S,6S)-2,6-diaminopimelate = meso-2,6-diaminopimelate. It participates in amino-acid biosynthesis; L-lysine biosynthesis via DAP pathway; DL-2,6-diaminopimelate from LL-2,6-diaminopimelate: step 1/1. Its function is as follows. Catalyzes the stereoinversion of LL-2,6-diaminopimelate (L,L-DAP) to meso-diaminopimelate (meso-DAP), a precursor of L-lysine and an essential component of the bacterial peptidoglycan. This chain is Diaminopimelate epimerase, found in Saccharophagus degradans (strain 2-40 / ATCC 43961 / DSM 17024).